The sequence spans 919 residues: MLX-interacting protein (919 aa).

The segment at M1–R72 is disordered. At A2 the chain carries N-acetylalanine. Phosphoserine occurs at positions 9, 27, 33, and 39. Positions S27 to E37 are enriched in acidic residues. Low complexity predominate over residues S44–A56. The segment at R73–D327 is required for cytoplasmic localization. Positions N322 to P445 are transactivation domain. 2 disordered regions span residues K542–K562 and D633–K712. S669 is subject to Phosphoserine. Over residues P670 to G685 the composition is skewed to polar residues. Residues Q686–S706 are compositionally biased toward low complexity. The bHLH domain maps to N719–L769. Positions L769 to L790 are leucine-zipper. The tract at residues W832–V881 is mediates heterotypic interactions between MLXIP and MLX and is required for cytoplasmic localization.

In terms of assembly, efficient DNA binding requires dimerization with another bHLH protein. Binds DNA as a homodimer or a heterodimer with MLX. Widely expressed in adult tissues. Most abundant in skeletal muscle.

It localises to the cytoplasm. Its subcellular location is the nucleus. The protein localises to the mitochondrion outer membrane. Binds DNA as a heterodimer with MLX and activates transcription. Binds to the canonical E box sequence 5'-CACGTG-3'. Plays a role in transcriptional activation of glycolytic target genes. Involved in glucose-responsive gene regulation. This Homo sapiens (Human) protein is MLX-interacting protein.